The chain runs to 515 residues: Maturase K (515 aa).

It belongs to the intron maturase 2 family. MatK subfamily.

It is found in the plastid. The protein localises to the chloroplast. In terms of biological role, usually encoded in the trnK tRNA gene intron. Probably assists in splicing its own and other chloroplast group II introns. The polypeptide is Maturase K (Alpinia calcarata (Snap ginger)).